The sequence spans 510 residues: GMP synthase [glutamine-hydrolyzing] (510 aa).

The 191-residue stretch at 5–195 (LVIVLDFGGQ…LFNIADLSAD (191 aa)) folds into the Glutamine amidotransferase type-1 domain. Cys82 (nucleophile) is an active-site residue. Active-site residues include His169 and Glu171. Residues 196-385 (WTMGSYIEET…LGLHREIVER (190 aa)) form the GMPS ATP-PPase domain. 223-229 (SGGIDST) is an ATP binding site.

As to quaternary structure, homodimer.

It catalyses the reaction XMP + L-glutamine + ATP + H2O = GMP + L-glutamate + AMP + diphosphate + 2 H(+). Its pathway is purine metabolism; GMP biosynthesis; GMP from XMP (L-Gln route): step 1/1. In terms of biological role, catalyzes the synthesis of GMP from XMP. This is GMP synthase [glutamine-hydrolyzing] from Natranaerobius thermophilus (strain ATCC BAA-1301 / DSM 18059 / JW/NM-WN-LF).